Consider the following 268-residue polypeptide: Tryptophan synthase alpha chain (268 aa).

Active-site proton acceptor residues include glutamate 49 and aspartate 60.

The protein belongs to the TrpA family. In terms of assembly, tetramer of two alpha and two beta chains.

The catalysed reaction is (1S,2R)-1-C-(indol-3-yl)glycerol 3-phosphate + L-serine = D-glyceraldehyde 3-phosphate + L-tryptophan + H2O. It functions in the pathway amino-acid biosynthesis; L-tryptophan biosynthesis; L-tryptophan from chorismate: step 5/5. Its function is as follows. The alpha subunit is responsible for the aldol cleavage of indoleglycerol phosphate to indole and glyceraldehyde 3-phosphate. The chain is Tryptophan synthase alpha chain from Aliivibrio fischeri (strain ATCC 700601 / ES114) (Vibrio fischeri).